The sequence spans 909 residues: GTPase activating protein homolog 4 (909 aa).

One can recognise an F-BAR domain in the interval Met-1 to Cys-257. The region spanning Ile-322 to Ser-513 is the Rho-GAP domain. Residues Ile-529–Ser-909 form a disordered region. Composition is skewed to low complexity over residues Ser-533–Asn-562 and Ser-571–Gln-602. The span at Ser-609 to Phe-625 shows a compositional bias: pro residues. The segment covering Gln-651–Gln-674 has biased composition (polar residues). Positions Lys-672–Ser-809 form a coiled coil. Over residues Leu-675–Lys-716 the composition is skewed to basic and acidic residues. Positions Ser-723–Ser-741 are enriched in low complexity. The span at Asn-742–Ile-765 shows a compositional bias: basic and acidic residues. Residues Ala-767–Ser-785 are compositionally biased toward polar residues. Composition is skewed to low complexity over residues Gln-786–Ser-828 and Ser-843–Ser-892.

Its subcellular location is the cytoplasm. It is found in the contractile vacuole. In terms of biological role, rho GTPase-activating protein involved in the signal transduction pathway. This Dictyostelium discoideum (Social amoeba) protein is GTPase activating protein homolog 4 (mgp4).